Consider the following 777-residue polypeptide: Intraflagellar transport protein 80 homolog (777 aa).

WD repeat units follow at residues lysine 12 to isoleucine 50, alanine 104 to leucine 143, glutamine 145 to lysine 185, alanine 186 to serine 225, proline 227 to glutamate 265, proline 267 to lysine 306, and lysine 504 to arginine 542. The interval threonine 758–proline 777 is disordered. Positions serine 765–proline 777 are enriched in polar residues.

In terms of assembly, component of the IFT complex B, at least composed of IFT20, IFT22, IFT25, IFT27, IFT46, IFT52, TRAF3IP1/IFT54, IFT57, IFT74, IFT80, IFT81, and IFT88. Interacts with IFT88. Interacts with IFT57 and IFT70B.

It is found in the cytoplasm. The protein localises to the cytoskeleton. The protein resides in the cilium basal body. It localises to the cilium axoneme. Its function is as follows. Component of the intraflagellar transport (IFT) complex B, which is essential for the development and maintenance of motile and sensory cilia. In Rattus norvegicus (Rat), this protein is Intraflagellar transport protein 80 homolog (Ift80).